The primary structure comprises 409 residues: Growth-regulating factor 8 (409 aa).

2 stretches are compositionally biased toward gly residues: residues 1 to 10 (MLSSCGGHGH) and 27 to 36 (QQGGGGGGGQ). The disordered stretch occupies residues 1 to 81 (MLSSCGGHGH…GGGGQMLSFS (81 aa)). Residues 56–68 (SSSSFLGSTSSSC) are compositionally biased toward low complexity. A QLQ domain is found at 107-142 (PFTPTQWMELEHQALIYKHIAANVSVPSSLLLPIRR). A WRC domain is found at 158-202 (DVEPRRCRRTDGKKWRCSRDAVGDQKYCERHINRGRHRSRKHVEG). 2 consecutive short sequence motifs (bipartite nuclear localization signal) follow at residues 163 to 173 (RCRRTDGKKWR) and 191 to 198 (RGRHRSRK). The interval 221 to 242 (SSRGHTVARQKQVKGSAATVSD) is disordered.

This sequence belongs to the GRF family.

The protein resides in the nucleus. Functionally, transcription activator that plays a regulatory role in gibberellin-induced stem elongation. The chain is Growth-regulating factor 8 (GRF8) from Oryza sativa subsp. japonica (Rice).